Reading from the N-terminus, the 146-residue chain is MAKEEVKQKKTKEKEPDITFFHPDILEVPKDGGLPYLKGYRCKKCGQLDFKTEMCTNCWSEEFEMVPLSRRGKVYSFSDIYIGQQGLATPYIFAYVDLPENLRVFAQLEGEVDTYRCDEEVELTLGPIRMNNDNLPIISYKFKKIA.

Residues Cys42, Cys45, Cys55, and Cys58 each coordinate Zn(2+).

Belongs to the BbsA family. As to quaternary structure, heterotetramer composed of two BbsA subunits and two BbsB subunits. Both BbsA and BbsB are essential for enzymatic activity.

The enzyme catalyses (S)-2-benzoylsuccinyl-CoA + CoA = benzoyl-CoA + succinyl-CoA. The protein operates within xenobiotic degradation; toluene degradation. In terms of biological role, component of the BbsAB thiolase complex, which catalyzes the thiolytic cleavage of (S)-2-benzoylsuccinyl-CoA to succinyl-CoA and benzoyl-CoA, the final step of anaerobic toluene metabolism. The BbsA subunit critically contributes to an induced-fit process for productive binding of a CoA substrate into the active site of BbsB. This Geobacter metallireducens (strain ATCC 53774 / DSM 7210 / GS-15) protein is Benzoylsuccinyl-CoA thiolase subunit BbsA.